Consider the following 3085-residue polypeptide: Genome polyprotein (3085 aa).

The Peptidase S30 domain occupies 170–313; that stretch reads LVAKSDFDDL…AGDVGRTMHY (144 aa). Catalysis depends on for P1 proteinase activity residues histidine 224, glutamate 233, and serine 266. Residues 365–368 carry the Involved in interaction with stylet and aphid transmission motif; the sequence is KMAC. The Involved in virions binding and aphid transmission motif lies at 622–624; the sequence is PTK. Residues 648-770 form the Peptidase C6 domain; that stretch reads MYIAKEGYCY…EGEMKWYRVG (123 aa). Active-site for helper component proteinase activity residues include cysteine 656 and histidine 729. In terms of domain architecture, Helicase ATP-binding spans 1241 to 1393; that stretch reads TICASSEQEF…TQHDVLIKIE (153 aa). 1254–1261 contributes to the ATP binding site; that stretch reads GAVGSGKS. The short motif at 1343 to 1346 is the DESH box element; sequence DESH. A Helicase C-terminal domain is found at 1412-1571; that stretch reads DVVQNGDNIL…NLPVMTHNVT (160 aa). A Nuclear localization signal motif is present at residues 1895-1904; that stretch reads ERGKRKGNNS. Position 1919 is an O-(5'-phospho-RNA)-tyrosine (tyrosine 1919). Positions 2047–2266 constitute a Peptidase C4 domain; sequence GKSIVKGLRN…VAWNGMTLRE (220 aa). Catalysis depends on for nuclear inclusion protein A activity residues histidine 2092, aspartate 2127, and cysteine 2198. A RdRp catalytic domain is found at 2535–2659; the sequence is WIYCDADGSQ…AIYPSKEKFL (125 aa). A disordered region spans residues 2801–2869; sequence DGPDIVTYQG…STAVPRLKQI (69 aa). Low complexity predominate over residues 2816–2831; the sequence is KSSQPQSSSPQVPQQV. Basic and acidic residues predominate over residues 2839–2855; sequence GRDKQSVIKHDSTKSKD. At threonine 3068 the chain carries Phosphothreonine.

It belongs to the potyviridae genome polyprotein family. In terms of assembly, interacts with host eIF4E protein (via cap-binding region); this interaction mediates the translation of the VPg-viral RNA conjugates. Part of a complex that comprises VPg, RNA, host EIF4E and EIF4G; this interaction mediates the translation of the VPg-viral RNA conjugates. VPg is uridylylated by the polymerase and is covalently attached to the 5'-end of the genomic RNA. This uridylylated form acts as a nucleotide-peptide primer for the polymerase. Post-translationally, potyviral RNA is expressed as two polyproteins which undergo post-translational proteolytic processing. Genome polyprotein is processed by NIa-pro, P1 and HC-pro proteinases resulting in the production of at least ten individual proteins. P3N-PIPO polyprotein is cleaved by P1 and HC-pro proteinases resulting in the production of three individual proteins. The P1 proteinase and the HC-pro cleave only their respective C-termini autocatalytically. 6K1 is essential for proper proteolytic separation of P3 from CI.

The protein resides in the host cytoplasmic vesicle. The protein localises to the host nucleus. It localises to the virion. It carries out the reaction RNA(n) + a ribonucleoside 5'-triphosphate = RNA(n+1) + diphosphate. It catalyses the reaction Hydrolyzes glutaminyl bonds, and activity is further restricted by preferences for the amino acids in P6 - P1' that vary with the species of potyvirus, e.g. Glu-Xaa-Xaa-Tyr-Xaa-Gln-|-(Ser or Gly) for the enzyme from tobacco etch virus. The natural substrate is the viral polyprotein, but other proteins and oligopeptides containing the appropriate consensus sequence are also cleaved.. The catalysed reaction is Hydrolyzes a Gly-|-Gly bond at its own C-terminus, commonly in the sequence -Tyr-Xaa-Val-Gly-|-Gly, in the processing of the potyviral polyprotein.. Its function is as follows. Required for aphid transmission and also has proteolytic activity. Only cleaves a Gly-Gly dipeptide at its own C-terminus. Interacts with virions and aphid stylets. Acts as a suppressor of RNA-mediated gene silencing, also known as post-transcriptional gene silencing (PTGS), a mechanism of plant viral defense that limits the accumulation of viral RNAs. May have RNA-binding activity. In terms of biological role, has helicase activity. It may be involved in replication. Functionally, indispensable for virus replication. Reduces the abundance of host transcripts related to jasmonic acid biosynthesis therefore altering the host defenses. In order to increase its own stability, decreases host protein degradation pathways. Indispensable for virus replication. Its function is as follows. Mediates the cap-independent, EIF4E-dependent translation of viral genomic RNAs. Binds to the cap-binding site of host EIF4E and thus interferes with the host EIF4E-dependent mRNA export and translation. VPg-RNA directly binds EIF4E and is a template for transcription. Also forms trimeric complexes with EIF4E-EIF4G, which are templates for translation. In terms of biological role, has RNA-binding and proteolytic activities. Functionally, an RNA-dependent RNA polymerase that plays an essential role in the virus replication. Involved in aphid transmission, cell-to-cell and systemis movement, encapsidation of the viral RNA and in the regulation of viral RNA amplification. The protein is Genome polyprotein of Beet mosaic virus (BtMV).